We begin with the raw amino-acid sequence, 327 residues long: Malate dehydrogenase (327 aa).

Position 11 to 17 (11 to 17 (GAAGQIG)) interacts with NAD(+). Substrate contacts are provided by R92 and R98. NAD(+) contacts are provided by residues N105, Q112, and 129–131 (VGN). The substrate site is built by N131 and R162. The active-site Proton acceptor is H187.

The protein belongs to the LDH/MDH superfamily. MDH type 2 family.

It catalyses the reaction (S)-malate + NAD(+) = oxaloacetate + NADH + H(+). Functionally, catalyzes the reversible oxidation of malate to oxaloacetate. The sequence is that of Malate dehydrogenase from Leptospira biflexa serovar Patoc (strain Patoc 1 / Ames).